The following is a 332-amino-acid chain: Beta-ketoacyl-[acyl-carrier-protein] synthase III 5 (332 aa).

Residues cysteine 111 and histidine 253 contribute to the active site. Residues 254 to 258 are ACP-binding; that stretch reads QANAR. Asparagine 283 is an active-site residue.

Belongs to the thiolase-like superfamily. FabH family. As to quaternary structure, homodimer.

It is found in the cytoplasm. It carries out the reaction malonyl-[ACP] + acetyl-CoA + H(+) = 3-oxobutanoyl-[ACP] + CO2 + CoA. Its pathway is lipid metabolism; fatty acid biosynthesis. Catalyzes the condensation reaction of fatty acid synthesis by the addition to an acyl acceptor of two carbons from malonyl-ACP. Catalyzes the first condensation reaction which initiates fatty acid synthesis and may therefore play a role in governing the total rate of fatty acid production. Possesses both acetoacetyl-ACP synthase and acetyl transacylase activities. Its substrate specificity determines the biosynthesis of branched-chain and/or straight-chain of fatty acids. The polypeptide is Beta-ketoacyl-[acyl-carrier-protein] synthase III 5 (Streptomyces coelicolor (strain ATCC BAA-471 / A3(2) / M145)).